Consider the following 537-residue polypeptide: Chaperonin GroEL (537 aa).

Residues 29–32 (TLGP), 86–90 (DGTTT), G413, and D492 each bind ATP.

It belongs to the chaperonin (HSP60) family. In terms of assembly, forms a cylinder of 14 subunits composed of two heptameric rings stacked back-to-back. Interacts with the co-chaperonin GroES.

It localises to the cytoplasm. It carries out the reaction ATP + H2O + a folded polypeptide = ADP + phosphate + an unfolded polypeptide.. In terms of biological role, together with its co-chaperonin GroES, plays an essential role in assisting protein folding. The GroEL-GroES system forms a nano-cage that allows encapsulation of the non-native substrate proteins and provides a physical environment optimized to promote and accelerate protein folding. This chain is Chaperonin GroEL, found in Dehalococcoides mccartyi (strain ATCC BAA-2100 / JCM 16839 / KCTC 5957 / BAV1).